A 478-amino-acid chain; its full sequence is MTRIKINARRIFSLLIPFFFFTSVHAEQTAAPATPVTVEAKNETFAPQHPDQYLSWKATSEQSERVDALAEDPRLVILWAGYPFSRDYNKPRGHAFAVTDVRETLRTGAPKNAEDGPLPMACWSCKSPDVARLIQKDGEDGYFHGKWARGGPEIVNNLGCADCHNTASPEFAKGKPELTLSRPYAARAMEAIGKPFEKAGRFDQQSMVCGQCHVEYYFDGKNKAVKFPWDDGMKVENMEQYYDKIAFSDWTNSLSKTPMLKAQHPEYETWTAGIHGKNNVTCIDCHMPKVQNAEGKLYTDHKIGNPFDNFAQTCANCHTQDKAALQKVVAERKQSINDLKIKVEDQLVHAHFEAKAALDAGATEAEMKPIQDDIRHAQWRWDLAIASHGIHMHAPEEGLRMLGTAMDKAADARTKLARLLATKGITHEIQIPDISTKEKAQQAIGLNMEQIKAEKQDFIKTVIPQWEEQARKNGLLSQ.

Residues M1–A26 form the signal peptide. A heme c-binding site is contributed by H94. C122, C125, and K126 together coordinate heme. Heme c-binding residues include C160, C163, H164, C209, C212, and H213. Residues E215, Y216, K261, and Q263 each coordinate Ca(2+). Residue Y216 coordinates substrate. H264 contributes to the substrate binding site. H275, C282, C285, H286, H301, C314, C317, H318, and H393 together coordinate heme c.

Belongs to the cytochrome c-552 family. Ca(2+) serves as cofactor. Requires heme c as cofactor.

It is found in the periplasm. It catalyses the reaction 6 Fe(III)-[cytochrome c] + NH4(+) + 2 H2O = 6 Fe(II)-[cytochrome c] + nitrite + 8 H(+). The protein operates within nitrogen metabolism; nitrate reduction (assimilation). Its function is as follows. Catalyzes the reduction of nitrite to ammonia, consuming six electrons in the process. The protein is Cytochrome c-552 of Escherichia coli O6:H1 (strain CFT073 / ATCC 700928 / UPEC).